A 101-amino-acid polypeptide reads, in one-letter code: Acylphosphatase-1 (101 aa).

Position 2 is an N-acetylserine (serine 2). N-acetylalanine is present on serine 2. In terms of domain architecture, Acylphosphatase-like spans serine 11–lysine 101. Active-site residues include arginine 26 and asparagine 44.

Belongs to the acylphosphatase family. As to expression, organ-common type isozyme is found in many different tissues.

The catalysed reaction is an acyl phosphate + H2O = a carboxylate + phosphate + H(+). The protein is Acylphosphatase-1 (ACYP1) of Bos taurus (Bovine).